Reading from the N-terminus, the 628-residue chain is Chaperone protein DnaK (628 aa).

Thr-197 is subject to Phosphothreonine; by autocatalysis. Basic and acidic residues predominate over residues 595 to 604 (AEAMYKKEQG). Residues 595–628 (AEAMYKKEQGEQAGAQPNQKAKKDDDDVIDAEVE) are disordered.

This sequence belongs to the heat shock protein 70 family.

Acts as a chaperone. The protein is Chaperone protein DnaK of Aliarcobacter butzleri (strain RM4018) (Arcobacter butzleri).